The primary structure comprises 378 residues: Packaging protein 3 (378 aa).

Disordered regions lie at residues 1-73 and 355-378; these read MHPV…EGPV and SRPP…DDFI. An interaction with packaging protein 1 region spans residues 1 to 178; it reads MHPVLQSVRN…AFGEELRNTC (178 aa). Low complexity-rich tracts occupy residues 16–35 and 49–58; these read GGPH…SVRR and PGAGATPTAG. S362 is modified (phosphoserine; by host). The segment covering 363 to 378 has biased composition (acidic residues); the sequence is FADEGPSESDDEDDFI.

The protein belongs to the adenoviridae packaging protein 3 family. Part of the genome packaging complex composed of packaging proteins 1, 2 and 3; this complex specifically binds to the packaging sequence on the left end of viral genomic DNA and performs packaging of the viral genome. Interacts with hexon-linking protein IIIa; this interaction is required to promote correct genome packaging. In terms of processing, cleaved at different sites by the viral protease during virion maturation.

The protein resides in the host nucleus. Its function is as follows. Involved in viral genome packaging through its interaction with packaging proteins 1 and 2. After proteolytic cleavage by adenovirus protease, L1 52/55k protein is removed from the capsid during viral maturation. The sequence is that of Packaging protein 3 from Galliformes (FAdV-1).